A 156-amino-acid polypeptide reads, in one-letter code: Cyanate hydratase (156 aa).

Catalysis depends on residues Arg96, Glu99, and Ser122.

Belongs to the cyanase family.

The catalysed reaction is cyanate + hydrogencarbonate + 3 H(+) = NH4(+) + 2 CO2. In terms of biological role, catalyzes the reaction of cyanate with bicarbonate to produce ammonia and carbon dioxide. The protein is Cyanate hydratase of Burkholderia vietnamiensis (strain G4 / LMG 22486) (Burkholderia cepacia (strain R1808)).